We begin with the raw amino-acid sequence, 334 residues long: Phosphate acyltransferase (334 aa).

Belongs to the PlsX family. As to quaternary structure, homodimer. Probably interacts with PlsY.

It localises to the cytoplasm. The enzyme catalyses a fatty acyl-[ACP] + phosphate = an acyl phosphate + holo-[ACP]. It participates in lipid metabolism; phospholipid metabolism. Catalyzes the reversible formation of acyl-phosphate (acyl-PO(4)) from acyl-[acyl-carrier-protein] (acyl-ACP). This enzyme utilizes acyl-ACP as fatty acyl donor, but not acyl-CoA. In Mycoplasmopsis agalactiae (strain NCTC 10123 / CIP 59.7 / PG2) (Mycoplasma agalactiae), this protein is Phosphate acyltransferase.